Reading from the N-terminus, the 95-residue chain is Small ribosomal subunit protein uS19 (95 aa).

It belongs to the universal ribosomal protein uS19 family.

Protein S19 forms a complex with S13 that binds strongly to the 16S ribosomal RNA. The chain is Small ribosomal subunit protein uS19 from Lactobacillus gasseri (strain ATCC 33323 / DSM 20243 / BCRC 14619 / CIP 102991 / JCM 1131 / KCTC 3163 / NCIMB 11718 / NCTC 13722 / AM63).